Reading from the N-terminus, the 225-residue chain is 3-dehydroquinate dehydratase (225 aa).

3-dehydroquinate contacts are provided by residues Ser-6, 30–32 (EWR), and Arg-62. Residue His-118 is the Proton donor/acceptor of the active site. Lys-143 serves as the catalytic Schiff-base intermediate with substrate. Arg-186, Ser-205, and Gln-209 together coordinate 3-dehydroquinate.

It belongs to the type-I 3-dehydroquinase family. As to quaternary structure, homodimer.

The catalysed reaction is 3-dehydroquinate = 3-dehydroshikimate + H2O. The protein operates within metabolic intermediate biosynthesis; chorismate biosynthesis; chorismate from D-erythrose 4-phosphate and phosphoenolpyruvate: step 3/7. In terms of biological role, involved in the third step of the chorismate pathway, which leads to the biosynthesis of aromatic amino acids. Catalyzes the cis-dehydration of 3-dehydroquinate (DHQ) and introduces the first double bond of the aromatic ring to yield 3-dehydroshikimate. The polypeptide is 3-dehydroquinate dehydratase (Streptococcus sanguinis (strain SK36)).